The following is a 550-amino-acid chain: Small ribosomal subunit protein uS3m (550 aa).

The segment at 112-133 (NDDTEEERNEVGGRGAGKRVES) is disordered.

This sequence belongs to the universal ribosomal protein uS3 family.

The protein resides in the mitochondrion. The sequence is that of Small ribosomal subunit protein uS3m (RPS3) from Oenothera berteroana (Bertero's evening primrose).